We begin with the raw amino-acid sequence, 530 residues long: Cytochrome P450 monooxygenase ausG (530 aa).

A helical transmembrane segment spans residues 31–51 (LLVAYRLPGLLLLFSITIILF). Cysteine 470 is a binding site for heme.

Belongs to the cytochrome P450 family. Requires heme as cofactor.

Its subcellular location is the membrane. It participates in secondary metabolite biosynthesis; terpenoid biosynthesis. In terms of biological role, cytochrome P450 monooxygenase; part of the gene cluster B that mediates the biosynthesis of the fungal meroterpenoid acetoxydehydroaustin. The first step of the pathway is the synthesis of 3,5-dimethylorsellinic acid by the polyketide synthase ausA. 3,5-dimethylorsellinic acid is then prenylated by the polyprenyl transferase ausN. Further epoxidation by the FAD-dependent monooxygenase ausM and cyclization by the probable terpene cyclase ausL lead to the formation of protoaustinoid A. Protoaustinoid A is then oxidized to spiro-lactone preaustinoid A3 by the combined action of the FAD-binding monooxygenases ausB and ausC, and the dioxygenase ausE. Acid-catalyzed keto-rearrangement and ring contraction of the tetraketide portion of preaustinoid A3 by ausJ lead to the formation of preaustinoid A4. The aldo-keto reductase ausK, with the help of ausH, is involved in the next step by transforming preaustinoid A4 into isoaustinone which is in turn hydroxylated by the P450 monooxygenase ausI to form austinolide. The cytochrome P450 monooxygenase ausG then modifies austinolide to austinol. Austinol is further acetylated to austin by the O-acetyltransferase ausP, which spontaneously changes to dehydroaustin. The cytochrome P450 monooxygenase then converts dehydroaustin is into 7-dehydrodehydroaustin. The hydroxylation catalyzed by ausR permits the second O-acetyltransferase ausQ to add an additional acetyl group to the molecule, leading to the formation of acetoxydehydroaustin. Due to genetic rearrangements of the clusters and the subsequent loss of some enzymes, the end product of the Penicillium brasilianum austinoid biosynthesis clusters is acetoxydehydroaustin. The protein is Cytochrome P450 monooxygenase ausG of Penicillium brasilianum.